A 697-amino-acid chain; its full sequence is Trishanku (697 aa).

Positions 1 to 94 are disordered; that stretch reads MEIEPVVRIS…NNNSNSNGTD (94 aa). Low complexity predominate over residues 12-47; that stretch reads NGNNNQNNNNNNNNNTNNNSNNNNNNNNSSNINSTN. Residues 58-72 are compositionally biased toward polar residues; it reads KMISNINNQKSPNPL. A compositionally biased stretch (low complexity) spans 73–91; it reads NSSVDDNNNTNNNNNSNSN. Residues 122–189 form the BTB domain; sequence SDVIFKVGDR…ICIGILDLDY (68 aa). The tract at residues 311–455 is disordered; sequence IQQQQQQQQQ…DSANDDYEYS (145 aa). Positions 312-331 are enriched in low complexity; it reads QQQQQQQQQQLQSANGASGK. Positions 332 to 344 are enriched in basic residues; it reads SHGKRSSSSHLKK. The segment covering 353-363 has biased composition (low complexity); the sequence is GSCSSRCSSRR. The span at 416 to 453 shows a compositional bias: acidic residues; that stretch reads DDFENDSEDGDDDDEDDDEDDDFTDDDDKDDSANDDYE.

As to expression, expressed strongly in presumptive spore (prespore or psp) cells during the late G2 phase of cell cycle. Present at a low level in vegetative cells.

In terms of biological role, required for normal morphogenesis and cell-type stability. The sequence is that of Trishanku (triA) from Dictyostelium discoideum (Social amoeba).